Reading from the N-terminus, the 389-residue chain is Large envelope protein (389 aa).

Position 1 is an N-acetylmethionine (methionine 1). A lipid anchor (N-myristoyl glycine; by host) is attached at glycine 2. The tract at residues 2–108 is pre-S1; that stretch reads GTNLSVPNPL…PPLRDTHPQA (107 aa). The segment at 2–163 is pre-S; it reads GTNLSVPNPL…LSTTGDPVPN (162 aa). At 2–170 the chain is on the virion surface; in external conformation side; sequence GTNLSVPNPL…VPNMENIASG (169 aa). The Intravirion; in internal conformation portion of the chain corresponds to 2-242; that stretch reads GTNLSVPNPL…PGYRWMCLRR (241 aa). Residues 109-163 are pre-S2; it reads MQWNSTTFHQTLQDPRVRALYFPAGGSSSGTVNPVQNTASSISSILSTTGDPVPN. The chain crosses the membrane as a helical span at residues 171–191; it reads LLGPLLVLQAGFFSLTKILTI. Topologically, residues 192–242 are intravirion; in external conformation; sequence PLSLDSWWTSLNFLGETPVCLGQNSQSQISSHSPTCCPPICPGYRWMCLRR. Residues 243 to 263 form a helical membrane-spanning segment; it reads FIIFLCILLLCLIFLLVLLDY. At 264–337 the chain is on the virion surface side; that stretch reads QGMLPVCPLI…WASVRFSWLS (74 aa). A glycan (N-linked (GlcNAc...) asparagine; by host) is linked at asparagine 309. The chain crosses the membrane as a helical span at residues 338–358; sequence LLVPFVQWFVGLSPTVWLSVI. Residues 359–364 lie on the Intravirion side of the membrane; that stretch reads WMMWFW. Residues 365–387 form a helical membrane-spanning segment; it reads GPSLYNILSPFMPLLPIFFCLWV. Residues 388–389 lie on the Virion surface side of the membrane; the sequence is YI.

It belongs to the orthohepadnavirus major surface antigen family. Interacts (via its myristoylated pre-S1 region) with the host SLC10A1/NTCP; this interaction is essential for viral entry. In terms of assembly, in its internal form (Li-HBsAg), interacts with the capsid protein and with the isoform S. Interacts with host chaperone CANX. As to quaternary structure, associates with host chaperone CANX through its pre-S2 N glycan; this association may be essential for isoform M proper secretion. Interacts with isoform L. Interacts with the antigens of satellite virus HDV (HDVAgs); this interaction is required for encapsidation of HDV genomic RNA. Post-translationally, isoform M is N-terminally acetylated by host at a ratio of 90%, and N-glycosylated by host at the pre-S2 region. In terms of processing, myristoylated; this modification is essential for its interaction with the host protein SLC10A1/NTCP.

The protein localises to the virion membrane. The large envelope protein exists in two topological conformations, one which is termed 'external' or Le-HBsAg and the other 'internal' or Li-HBsAg. In its external conformation the protein attaches the virus to cell receptors and thereby initiating infection. This interaction determines the species specificity and liver tropism. This attachment induces virion internalization predominantly through caveolin-mediated endocytosis. The large envelope protein also assures fusion between virion membrane and endosomal membrane. In its internal conformation the protein plays a role in virion morphogenesis and mediates the contact with the nucleocapsid like a matrix protein. Its function is as follows. The middle envelope protein plays an important role in the budding of the virion. It is involved in the induction of budding in a nucleocapsid independent way. In this process the majority of envelope proteins bud to form subviral lipoprotein particles of 22 nm of diameter that do not contain a nucleocapsid. This chain is Large envelope protein, found in Hepatitis B virus genotype B2 (isolate Indonesia/pIDW420/1988) (HBV-B).